The sequence spans 98 residues: NADH-ubiquinone oxidoreductase chain 4L (98 aa).

3 helical membrane passes run 2–22 (SPIY…TLLF), 26–46 (LMST…MVTS), and 61–81 (ITML…LVMI).

It belongs to the complex I subunit 4L family. In terms of assembly, core subunit of respiratory chain NADH dehydrogenase (Complex I) which is composed of 45 different subunits.

The protein localises to the mitochondrion inner membrane. It carries out the reaction a ubiquinone + NADH + 5 H(+)(in) = a ubiquinol + NAD(+) + 4 H(+)(out). Functionally, core subunit of the mitochondrial membrane respiratory chain NADH dehydrogenase (Complex I) which catalyzes electron transfer from NADH through the respiratory chain, using ubiquinone as an electron acceptor. Part of the enzyme membrane arm which is embedded in the lipid bilayer and involved in proton translocation. This chain is NADH-ubiquinone oxidoreductase chain 4L (MT-ND4L), found in Nephelomys albigularis (Tomes's rice rat).